Reading from the N-terminus, the 307-residue chain is Homoserine kinase (307 aa).

Position 92 to 102 (92 to 102) interacts with ATP; it reads PLARGLGSSAT.

This sequence belongs to the GHMP kinase family. Homoserine kinase subfamily.

The protein localises to the cytoplasm. It carries out the reaction L-homoserine + ATP = O-phospho-L-homoserine + ADP + H(+). It functions in the pathway amino-acid biosynthesis; L-threonine biosynthesis; L-threonine from L-aspartate: step 4/5. Functionally, catalyzes the ATP-dependent phosphorylation of L-homoserine to L-homoserine phosphate. The sequence is that of Homoserine kinase (thrB) from Microchaete diplosiphon (Fremyella diplosiphon).